Here is a 67-residue protein sequence, read N- to C-terminus: ATP synthase F(0) complex subunit 8 (67 aa).

Residues threonine 8–phenylalanine 24 form a helical membrane-spanning segment. Position 54 is an N6-acetyllysine; alternate (lysine 54). At lysine 54 the chain carries N6-succinyllysine; alternate. Lysine 57 carries the N6-acetyllysine modification.

The protein belongs to the ATPase protein 8 family. As to quaternary structure, component of the ATP synthase complex composed at least of ATP5F1A/subunit alpha, ATP5F1B/subunit beta, ATP5MC1/subunit c (homooctomer), MT-ATP6/subunit a, MT-ATP8/subunit 8, ATP5ME/subunit e, ATP5MF/subunit f, ATP5MG/subunit g, ATP5MK/subunit k, ATP5MJ/subunit j, ATP5F1C/subunit gamma, ATP5F1D/subunit delta, ATP5F1E/subunit epsilon, ATP5PF/subunit F6, ATP5PB/subunit b, ATP5PD/subunit d, ATP5PO/subunit OSCP. ATP synthase complex consists of a soluble F(1) head domain (subunits alpha(3) and beta(3)) - the catalytic core - and a membrane F(0) domain - the membrane proton channel (subunits c, a, 8, e, f, g, k and j). These two domains are linked by a central stalk (subunits gamma, delta, and epsilon) rotating inside the F1 region and a stationary peripheral stalk (subunits F6, b, d, and OSCP). Interacts with PRICKLE3.

The protein localises to the mitochondrion membrane. Its function is as follows. Subunit 8, of the mitochondrial membrane ATP synthase complex (F(1)F(0) ATP synthase or Complex V) that produces ATP from ADP in the presence of a proton gradient across the membrane which is generated by electron transport complexes of the respiratory chain. ATP synthase complex consist of a soluble F(1) head domain - the catalytic core - and a membrane F(1) domain - the membrane proton channel. These two domains are linked by a central stalk rotating inside the F(1) region and a stationary peripheral stalk. During catalysis, ATP synthesis in the catalytic domain of F(1) is coupled via a rotary mechanism of the central stalk subunits to proton translocation. In vivo, can only synthesize ATP although its ATP hydrolase activity can be activated artificially in vitro. Part of the complex F(0) domain. The sequence is that of ATP synthase F(0) complex subunit 8 from Dugong dugon (Dugong).